The primary structure comprises 103 residues: Serine protease inhibitor 4 (103 aa).

A disulfide bridge links C56 with C73.

This sequence belongs to the protease inhibitor I3 (leguminous Kunitz-type inhibitor) family.

The protein localises to the vacuole. In terms of biological role, inhibitor of serine protease. May protect the plant by inhibiting proteases of invading organisms. The protein is Serine protease inhibitor 4 of Solanum tuberosum (Potato).